A 443-amino-acid chain; its full sequence is UPF0597 protein Dvul_2496 (443 aa).

Positions 156-178 (GMERAPEADGTLHGGASCEPSAS) are disordered.

The protein belongs to the UPF0597 family.

The chain is UPF0597 protein Dvul_2496 from Nitratidesulfovibrio vulgaris (strain DP4) (Desulfovibrio vulgaris).